Consider the following 637-residue polypeptide: 1-deoxy-D-xylulose-5-phosphate synthase 1 (637 aa).

Residues His-74 and 115–117 (GHS) each bind thiamine diphosphate. Asp-146 is a binding site for Mg(2+). Thiamine diphosphate-binding positions include 147-148 (GS), Asn-175, Tyr-286, and Glu-368. Asn-175 contributes to the Mg(2+) binding site.

The protein belongs to the transketolase family. DXPS subfamily. As to quaternary structure, homodimer. The cofactor is Mg(2+). Thiamine diphosphate serves as cofactor.

The catalysed reaction is D-glyceraldehyde 3-phosphate + pyruvate + H(+) = 1-deoxy-D-xylulose 5-phosphate + CO2. It functions in the pathway metabolic intermediate biosynthesis; 1-deoxy-D-xylulose 5-phosphate biosynthesis; 1-deoxy-D-xylulose 5-phosphate from D-glyceraldehyde 3-phosphate and pyruvate: step 1/1. In terms of biological role, catalyzes the acyloin condensation reaction between C atoms 2 and 3 of pyruvate and glyceraldehyde 3-phosphate to yield 1-deoxy-D-xylulose-5-phosphate (DXP). This chain is 1-deoxy-D-xylulose-5-phosphate synthase 1, found in Geobacter sulfurreducens (strain ATCC 51573 / DSM 12127 / PCA).